The sequence spans 177 residues: UBA-like domain-containing protein 1 (177 aa).

The disordered stretch occupies residues 89-177 (ESFHSGGSGS…RAHPAMEAER (89 aa)). Residues 112 to 138 (PHAATSSSAASSWPTAASPPGGPQHHQ) show a composition bias toward low complexity. Positions 139-151 (PQPPLWTPTPPSP) are enriched in pro residues. Residues 167–177 (PRAHPAMEAER) are compositionally biased toward basic and acidic residues.

It belongs to the UBALD family.

The sequence is that of UBA-like domain-containing protein 1 (UBALD1) from Homo sapiens (Human).